The following is a 407-amino-acid chain: MDINKPGWNQSDQQATAYDPNQQQYYGDGSTYYDPDQAVDPNQAYYPDPNTYPDAAAYYGYGQDGQAYPQDYAQDPNQAYYADPNAYQDPNAYTDPNAYVDPNAYQDPNAYVDPNNYTDPNAYYGYGQDGQAYPQDYAQDPNQAYYAYVDPNAYQDPNAYTDPYYVTSTDHNAYYGQVDNVPALEASDLAYEVTPQEQAAEQELFSEPETKVIREIHEFPFEKIRSYFQTDFDSYNSRLTQLKDKLDNAIFSMRKAIDTVKENSANLQIMKQNFERQLKEQQTQRLTSNTDAEKIGAKINQLEERMQRLSRTMESVEWTKKEPRQEQFDPRFVDPRNFNNYVNNTDTMMSMFEKVLMMNLLRSTTPVQPPVQYFTPQPLTASPRPVYEEPISASFRRRGYRGDEFYE.

A disordered region spans residues 1–50 (MDINKPGWNQSDQQATAYDPNQQQYYGDGSTYYDPDQAVDPNQAYYPDPN). Residues 7-25 (GWNQSDQQATAYDPNQQQY) are compositionally biased toward polar residues. Repeat copies occupy residues 40 to 45 (DPNQAY), 75 to 80 (DPNQAY), 83 to 87 (DPNAY), 89 to 93 (DPNAY), 95 to 99 (DPNAY), 101 to 105 (DPNAY), 107 to 111 (DPNAY), 119 to 123 (DPNAY), 140 to 145 (DPNQAY), 150 to 154 (DPNAY), 156 to 160 (DPNAY), and 170 to 174 (DHNAY). The interval 40-174 (DPNQAYYPDP…YVTSTDHNAY (135 aa)) is 12 X 5 AA repeats of D-P-N-Q-A-Y.

Post-translationally, the N-terminus is blocked.

The protein resides in the cell membrane. The polypeptide is Proline-rich P65 protein (p65) (Mycoplasmoides pneumoniae (strain ATCC 15531 / DSM 23978 / CIP 103766 / NBRC 14401 / NCTC 10119 / FH) (Mycoplasma pneumoniae)).